The following is a 78-amino-acid chain: UPF0291 protein MCCL_0996 (78 aa).

It belongs to the UPF0291 family.

The protein resides in the cytoplasm. This chain is UPF0291 protein MCCL_0996, found in Macrococcus caseolyticus (strain JCSC5402) (Macrococcoides caseolyticum).